A 307-amino-acid polypeptide reads, in one-letter code: Aspartate carbamoyltransferase catalytic subunit (307 aa).

R56 and T57 together coordinate carbamoyl phosphate. K84 lines the L-aspartate pocket. Residues R106, H136, and Q139 each contribute to the carbamoyl phosphate site. Residues R169 and R221 each contribute to the L-aspartate site. The carbamoyl phosphate site is built by A262 and P263.

The protein belongs to the aspartate/ornithine carbamoyltransferase superfamily. ATCase family. As to quaternary structure, heterododecamer (2C3:3R2) of six catalytic PyrB chains organized as two trimers (C3), and six regulatory PyrI chains organized as three dimers (R2).

It carries out the reaction carbamoyl phosphate + L-aspartate = N-carbamoyl-L-aspartate + phosphate + H(+). The protein operates within pyrimidine metabolism; UMP biosynthesis via de novo pathway; (S)-dihydroorotate from bicarbonate: step 2/3. In terms of biological role, catalyzes the condensation of carbamoyl phosphate and aspartate to form carbamoyl aspartate and inorganic phosphate, the committed step in the de novo pyrimidine nucleotide biosynthesis pathway. The chain is Aspartate carbamoyltransferase catalytic subunit from Streptococcus pneumoniae (strain P1031).